The following is a 420-amino-acid chain: Protein MucB (420 aa).

In terms of domain architecture, UmuC spans 2–187 (FALIDVNGMY…LPVAEVWGVG (186 aa)).

This sequence belongs to the DNA polymerase type-Y family.

Functionally, involved in UV protection and mutation. In Escherichia coli, this protein is Protein MucB (mucB).